A 404-amino-acid polypeptide reads, in one-letter code: Tyrosine--tRNA ligase (404 aa).

The 'HIGH' region motif lies at 45-54 (PTAPDLHLGH). The 'KMSKS' region motif lies at 229–233 (KMSKS). ATP is bound at residue Lys232. The S4 RNA-binding domain maps to 342-402 (IFIASIVRLA…GKKAIAQVTF (61 aa)).

This sequence belongs to the class-I aminoacyl-tRNA synthetase family. TyrS type 2 subfamily. Homodimer.

Its subcellular location is the cytoplasm. The enzyme catalyses tRNA(Tyr) + L-tyrosine + ATP = L-tyrosyl-tRNA(Tyr) + AMP + diphosphate + H(+). Catalyzes the attachment of tyrosine to tRNA(Tyr) in a two-step reaction: tyrosine is first activated by ATP to form Tyr-AMP and then transferred to the acceptor end of tRNA(Tyr). This Acinetobacter baylyi (strain ATCC 33305 / BD413 / ADP1) protein is Tyrosine--tRNA ligase.